Reading from the N-terminus, the 176-residue chain is Transcription factor E (176 aa).

The HTH TFE/IIEalpha-type domain occupies 5-89 (IDQLMKDMAR…YWKANVDQIN (85 aa)).

This sequence belongs to the TFE family. Monomer. Interaction with RNA polymerase subunits RpoF and RpoE is necessary for Tfe stimulatory transcription activity. Able to interact with Tbp and RNA polymerase in the absence of DNA promoter. Interacts both with the preinitiation and elongation complexes.

In terms of biological role, transcription factor that plays a role in the activation of archaeal genes transcribed by RNA polymerase. Facilitates transcription initiation by enhancing TATA-box recognition by TATA-box-binding protein (Tbp), and transcription factor B (Tfb) and RNA polymerase recruitment. Not absolutely required for transcription in vitro, but particularly important in cases where Tbp or Tfb function is not optimal. It dynamically alters the nucleic acid-binding properties of RNA polymerases by stabilizing the initiation complex and destabilizing elongation complexes. Seems to translocate with the RNA polymerase following initiation and acts by binding to the non template strand of the transcription bubble in elongation complexes. The polypeptide is Transcription factor E (Metallosphaera sedula (strain ATCC 51363 / DSM 5348 / JCM 9185 / NBRC 15509 / TH2)).